An 84-amino-acid polypeptide reads, in one-letter code: Delta-stichotoxin-Sgt3a (84 aa).

The N-terminal stretch at 1–19 (MAYLKIVLVALMLVVAVSA) is a signal peptide. A propeptide spanning residues 20 to 33 (MRLSDQEDQDISVA) is cleaved from the precursor. Cystine bridges form between C38/C78, C40/C68, and C61/C79. A propeptide is located at residue G84.

It belongs to the sea anemone sodium channel inhibitory toxin family. Type II subfamily.

Its subcellular location is the secreted. It is found in the nematocyst. Its function is as follows. Binds specifically to voltage-gated sodium channels (Nav), thereby delaying their inactivation during signal transduction. This chain is Delta-stichotoxin-Sgt3a, found in Stichodactyla gigantea (Giant carpet anemone).